The sequence spans 528 residues: Na(+)/H(+) antiporter NhaB (528 aa).

11 consecutive transmembrane segments (helical) span residues 23–45 (FAIL…VAGW), 66–86 (PGGL…SQVL), 95–115 (VLLL…LLLF), 139–159 (AFLS…AVAV), 203–223 (LLMH…VGEP), 241–261 (LRMS…CFLV), 310–330 (LIIG…SVII), 349–369 (EEAL…GVII), 390–410 (LVIF…VFVG), 448–468 (ATPN…APLI), and 476–496 (VWMA…AIQF).

This sequence belongs to the NhaB Na(+)/H(+) (TC 2.A.34) antiporter family.

The protein localises to the cell inner membrane. The enzyme catalyses 2 Na(+)(in) + 3 H(+)(out) = 2 Na(+)(out) + 3 H(+)(in). In terms of biological role, na(+)/H(+) antiporter that extrudes sodium in exchange for external protons. The chain is Na(+)/H(+) antiporter NhaB from Shewanella piezotolerans (strain WP3 / JCM 13877).